The sequence spans 115 residues: MGTSTAKEAHALIASLRSAYSATPTKLKIIDLYVVYAILTAVVQVVYMAIVGSFPFNAFLSGVLSCTGTAVLAVCLRMQVNKENREFKDLPPERAFADFVLCNLVLHLVIMNFLG.

Residues 1–31 (MGTSTAKEAHALIASLRSAYSATPTKLKIID) lie on the Cytoplasmic side of the membrane. A helical transmembrane segment spans residues 32 to 52 (LYVVYAILTAVVQVVYMAIVG). At 53–55 (SFP) the chain is on the lumenal side. The chain crosses the membrane as a helical span at residues 56–76 (FNAFLSGVLSCTGTAVLAVCL). Topologically, residues 77-94 (RMQVNKENREFKDLPPER) are cytoplasmic. The helical transmembrane segment at 95–115 (AFADFVLCNLVLHLVIMNFLG) threads the bilayer.

It belongs to the DAD/OST2 family. In terms of assembly, component of the oligosaccharyltransferase (OST) complex.

It is found in the endoplasmic reticulum membrane. Its pathway is protein modification; protein glycosylation. Its function is as follows. Subunit of the oligosaccharyl transferase (OST) complex that catalyzes the initial transfer of a defined glycan (Glc(3)Man(9)GlcNAc(2) in eukaryotes) from the lipid carrier dolichol-pyrophosphate to an asparagine residue within an Asn-X-Ser/Thr consensus motif in nascent polypeptide chains, the first step in protein N-glycosylation. N-glycosylation occurs cotranslationally and the complex associates with the Sec61 complex at the channel-forming translocon complex that mediates protein translocation across the endoplasmic reticulum (ER). All subunits are required for a maximal enzyme activity. The sequence is that of Dolichyl-diphosphooligosaccharide--protein glycosyltransferase subunit DAD1 (DAD1) from Picea mariana (Black spruce).